The chain runs to 398 residues: Na(+)/H(+) antiporter NhaA (398 aa).

The next 12 membrane-spanning stretches (helical) occupy residues 9 to 29, 57 to 77, 95 to 115, 124 to 144, 154 to 174, 177 to 197, 204 to 224, 226 to 246, 255 to 275, 288 to 308, 329 to 349, and 359 to 379; these read MITHPAAGGVLLFAAALAAIV, LSLLVLVNDGLMAVFFLAVGL, AFPAIAALGGMVAPAVIYSLM, AGWAIPAATDIAFAVGVLALL, VFMLALAIIDDLGAIVIIALF, TALEPLALAAAGAVIGIMALM, FLSLYLLLGAVLWGCILLSGI, ATLAGVVVGGLIPLTLPSTEV, WLQPWVVYLILPLFAFANAGI, FLPLGIAAGLVVGKPLGIVLF, IAAAAMLCGIGFTMSIFIANL, and IVLAKVGILSGSVIAALLGYL.

It belongs to the NhaA Na(+)/H(+) (TC 2.A.33) antiporter family.

Its subcellular location is the cell inner membrane. The enzyme catalyses Na(+)(in) + 2 H(+)(out) = Na(+)(out) + 2 H(+)(in). Functionally, na(+)/H(+) antiporter that extrudes sodium in exchange for external protons. This chain is Na(+)/H(+) antiporter NhaA, found in Sodalis glossinidius (strain morsitans).